We begin with the raw amino-acid sequence, 70 residues long: Large ribosomal subunit protein bL31 (70 aa).

This sequence belongs to the bacterial ribosomal protein bL31 family. Type A subfamily. In terms of assembly, part of the 50S ribosomal subunit.

In terms of biological role, binds the 23S rRNA. This is Large ribosomal subunit protein bL31 from Chlorobium chlorochromatii (strain CaD3).